The sequence spans 734 residues: Photosystem I P700 chlorophyll a apoprotein A2 (734 aa).

Transmembrane regions (helical) follow at residues 46 to 69 (IFAS…FHVA), 135 to 158 (LYTG…LHLQ), 175 to 199 (LNHH…HVAI), 273 to 291 (IAHH…GHMY), 330 to 353 (LHFQ…QHMY), 369 to 395 (AALY…IFFI), 417 to 439 (AIIS…LYVH), and 517 to 535 (FLVH…LILV). [4Fe-4S] cluster is bound by residues Cys559 and Cys568. Transmembrane regions (helical) follow at residues 575–596 (AFYL…YWHW) and 643–665 (LSVW…MFLI). Residues His654, Met662, and Tyr670 each contribute to the chlorophyll a site. Trp671 is a binding site for phylloquinone. The chain crosses the membrane as a helical span at residues 707–727 (LVGLAHFSVGYIFTYAAFLIA).

The protein belongs to the PsaA/PsaB family. The PsaA/B heterodimer binds the P700 chlorophyll special pair and subsequent electron acceptors. PSI consists of a core antenna complex that captures photons, and an electron transfer chain that converts photonic excitation into a charge separation. The eukaryotic PSI reaction center is composed of at least 11 subunits. P700 is a chlorophyll a/chlorophyll a' dimer, A0 is one or more chlorophyll a, A1 is one or both phylloquinones and FX is a shared 4Fe-4S iron-sulfur center. serves as cofactor.

The protein resides in the plastid. Its subcellular location is the chloroplast thylakoid membrane. It catalyses the reaction reduced [plastocyanin] + hnu + oxidized [2Fe-2S]-[ferredoxin] = oxidized [plastocyanin] + reduced [2Fe-2S]-[ferredoxin]. Its function is as follows. PsaA and PsaB bind P700, the primary electron donor of photosystem I (PSI), as well as the electron acceptors A0, A1 and FX. PSI is a plastocyanin-ferredoxin oxidoreductase, converting photonic excitation into a charge separation, which transfers an electron from the donor P700 chlorophyll pair to the spectroscopically characterized acceptors A0, A1, FX, FA and FB in turn. Oxidized P700 is reduced on the lumenal side of the thylakoid membrane by plastocyanin. The protein is Photosystem I P700 chlorophyll a apoprotein A2 of Citrus sinensis (Sweet orange).